The following is a 287-amino-acid chain: BURP domain-containing protein 2 (287 aa).

Positions 1-21 (MARSLAALLLLLVAAAGASHA) are cleaved as a signal peptide. One can recognise a BURP domain in the interval 67-287 (FFLEKDLFPG…PQDDMLWVRN (221 aa)).

In terms of tissue distribution, expressed in shoot.

This Oryza sativa subsp. japonica (Rice) protein is BURP domain-containing protein 2 (BURP2).